The chain runs to 517 residues: Crotonobetaine/carnitine--CoA ligase (517 aa).

Belongs to the ATP-dependent AMP-binding enzyme family.

The catalysed reaction is 4-(trimethylamino)butanoate + ATP + CoA = 4-(trimethylamino)butanoyl-CoA + AMP + diphosphate. The enzyme catalyses crotonobetaine + ATP + CoA = crotonobetainyl-CoA + AMP + diphosphate. It catalyses the reaction (R)-carnitine + ATP + CoA = (R)-carnitinyl-CoA + AMP + diphosphate. It participates in amine and polyamine metabolism; carnitine metabolism. Catalyzes the transfer of CoA to carnitine, generating the initial carnitinyl-CoA needed for the CaiB reaction cycle. Also has activity toward crotonobetaine and gamma-butyrobetaine. This Escherichia coli (strain SE11) protein is Crotonobetaine/carnitine--CoA ligase.